The chain runs to 358 residues: MYNRQLILEDGTVYKGYAFGADVENVGEVVFNTSMTGYQEILSDPSYNGQIVTLTYPLIGNYGINRDDFESMKPCIKGMVVKEVCATPSNFRSEKTLDEALKDFGIPGIYGIDTRALTRKLRSKGVVKGCLVSIDRNVDEVVAELKKTVLPTNQIEQVSSKSISPALGRGRRVVLVDLGMKIGIVRELVSRGCDVIVVPYNTTAEEVLRLEPDGVMLTNGPGDPEDAKESIEMIKGIINKVTIFGICMGHQLVSLACGAKTYKLKFGHRGGNHPVKNILTGRVDITSQNHGYAVDIDSLNDTDLELTHIAINDRSCEGVRHKKYPVFTVQFHPEAAAGPHDTSYLFDEFIKNIDNNMK.

2 CPSase regions span residues 1–168 (MYNR…PALG) and 1–171 (MYNR…GRGR). L-glutamine contacts are provided by Ser46, Gly220, and Gly222. Residues 172-358 (RVVLVDLGMK…FIKNIDNNMK (187 aa)) form the Glutamine amidotransferase type-1 domain. Cys247 functions as the Nucleophile in the catalytic mechanism. Residues Met248, Gln251, Asn289, Gly291, and Tyr292 each coordinate L-glutamine. Catalysis depends on residues His332 and Glu334.

This sequence belongs to the CarA family. Composed of two chains; the small (or glutamine) chain promotes the hydrolysis of glutamine to ammonia, which is used by the large (or ammonia) chain to synthesize carbamoyl phosphate. Tetramer of heterodimers (alpha,beta)4.

It carries out the reaction hydrogencarbonate + L-glutamine + 2 ATP + H2O = carbamoyl phosphate + L-glutamate + 2 ADP + phosphate + 2 H(+). The catalysed reaction is L-glutamine + H2O = L-glutamate + NH4(+). It functions in the pathway amino-acid biosynthesis; L-arginine biosynthesis; carbamoyl phosphate from bicarbonate: step 1/1. The protein operates within pyrimidine metabolism; UMP biosynthesis via de novo pathway; (S)-dihydroorotate from bicarbonate: step 1/3. Its function is as follows. Small subunit of the glutamine-dependent carbamoyl phosphate synthetase (CPSase). CPSase catalyzes the formation of carbamoyl phosphate from the ammonia moiety of glutamine, carbonate, and phosphate donated by ATP, constituting the first step of 2 biosynthetic pathways, one leading to arginine and/or urea and the other to pyrimidine nucleotides. The small subunit (glutamine amidotransferase) binds and cleaves glutamine to supply the large subunit with the substrate ammonia. The chain is Carbamoyl phosphate synthase small chain from Fusobacterium nucleatum subsp. nucleatum (strain ATCC 25586 / DSM 15643 / BCRC 10681 / CIP 101130 / JCM 8532 / KCTC 2640 / LMG 13131 / VPI 4355).